Reading from the N-terminus, the 574-residue chain is Proline--tRNA ligase (574 aa).

Belongs to the class-II aminoacyl-tRNA synthetase family. ProS type 1 subfamily. As to quaternary structure, homodimer.

The protein localises to the cytoplasm. The catalysed reaction is tRNA(Pro) + L-proline + ATP = L-prolyl-tRNA(Pro) + AMP + diphosphate. Catalyzes the attachment of proline to tRNA(Pro) in a two-step reaction: proline is first activated by ATP to form Pro-AMP and then transferred to the acceptor end of tRNA(Pro). As ProRS can inadvertently accommodate and process non-cognate amino acids such as alanine and cysteine, to avoid such errors it has two additional distinct editing activities against alanine. One activity is designated as 'pretransfer' editing and involves the tRNA(Pro)-independent hydrolysis of activated Ala-AMP. The other activity is designated 'posttransfer' editing and involves deacylation of mischarged Ala-tRNA(Pro). The misacylated Cys-tRNA(Pro) is not edited by ProRS. This Nitratidesulfovibrio vulgaris (strain DP4) (Desulfovibrio vulgaris) protein is Proline--tRNA ligase.